A 419-amino-acid chain; its full sequence is Enolase (419 aa).

Gln161 contributes to the (2R)-2-phosphoglycerate binding site. Glu205 (proton donor) is an active-site residue. Asp240, Glu283, and Asp309 together coordinate Mg(2+). 4 residues coordinate (2R)-2-phosphoglycerate: Lys334, Arg363, Ser364, and Lys385. The Proton acceptor role is filled by Lys334.

The protein belongs to the enolase family. Requires Mg(2+) as cofactor.

The protein localises to the cytoplasm. The protein resides in the secreted. It localises to the cell surface. It catalyses the reaction (2R)-2-phosphoglycerate = phosphoenolpyruvate + H2O. Its pathway is carbohydrate degradation; glycolysis; pyruvate from D-glyceraldehyde 3-phosphate: step 4/5. Functionally, catalyzes the reversible conversion of 2-phosphoglycerate (2-PG) into phosphoenolpyruvate (PEP). It is essential for the degradation of carbohydrates via glycolysis. This is Enolase from Saccharolobus islandicus (strain L.S.2.15 / Lassen #1) (Sulfolobus islandicus).